The primary structure comprises 533 residues: NAD(P)H-quinone oxidoreductase chain 4 1 (533 aa).

Transmembrane regions (helical) follow at residues 6–26, 37–57, 87–107, 113–133, 137–157, 169–189, 209–229, 243–263, 277–297, 311–331, 332–352, 376–396, 417–437, and 461–481; these read FPWL…IPLI, YSLF…WQHF, LSMP…LASW, PKLF…VFTA, MLFF…ISIW, FILY…ALAF, WLEL…LSIF, NAPG…YALI, FAPV…LNAF, ISHM…GLNG, ALLQ…LAGV, FALF…SGFV, VTIL…LSML, and LFVA…PKLT.

The protein belongs to the complex I subunit 4 family.

It is found in the cellular thylakoid membrane. It carries out the reaction a plastoquinone + NADH + (n+1) H(+)(in) = a plastoquinol + NAD(+) + n H(+)(out). The catalysed reaction is a plastoquinone + NADPH + (n+1) H(+)(in) = a plastoquinol + NADP(+) + n H(+)(out). Functionally, NDH-1 shuttles electrons from NAD(P)H, via FMN and iron-sulfur (Fe-S) centers, to quinones in the respiratory chain. The immediate electron acceptor for the enzyme in this species is believed to be plastoquinone. Couples the redox reaction to proton translocation (for every two electrons transferred, four hydrogen ions are translocated across the cytoplasmic membrane), and thus conserves the redox energy in a proton gradient. The chain is NAD(P)H-quinone oxidoreductase chain 4 1 from Synechococcus elongatus (strain ATCC 33912 / PCC 7942 / FACHB-805) (Anacystis nidulans R2).